The following is a 68-amino-acid chain: Venom peptide 3 (68 aa).

Residues 1–25 (MTKQSIVIVLFAAIAMMACLQRVTA) form the signal peptide. 5 AXPX repeats span residues 25–28 (AEPA), 33–36 (AAPI), 37–40 (AEPY), 41–44 (ANPE), and 47–50 (ASPE). Residues 26–51 (EPAPEPIAAPIAEPYANPEAIASPEA) constitute a propeptide that is removed on maturation. Leu65 is subject to Leucine amide.

In terms of tissue distribution, expressed by the venom gland.

It localises to the secreted. It is found in the target cell membrane. Its function is as follows. Antimicrobial peptide with strong activity against the fungi B.cinerea (MIC=5 uM) and C.albicans (MIC=33 uM), and no activity against the Gram-negative bacterium E.coli (MIC&gt;200 uM) and the Gram-positive bacterium S.aureus (MIC&gt;200 uM). Shows cytolytic activity against insect cell lines. Has no hemolytic activity against human erythrocytes. In vivo, peptide injection in the vicinity of the head and thorax of lepidopteran larvae induces feeding disorder that lasts one or two days before recovering. This Orancistrocerus drewseni (Solitary wasp) protein is Venom peptide 3.